The sequence spans 151 residues: uncharacterized protein (151 aa).

Residues Lys2–Gln133 enclose the Response regulatory domain. Asp53 carries the post-translational modification 4-aspartylphosphate.

This is an uncharacterized protein from Sinorhizobium fredii (strain NBRC 101917 / NGR234).